Reading from the N-terminus, the 159-residue chain is Transcriptional repressor NrdR (159 aa).

Residues 3–34 fold into a zinc finger; that stretch reads CPFCRHDDTQVVDSRVSEDGAAIRRRRRCSAC. Positions 49–139 constitute an ATP-cone domain; sequence PFVVKKDGSR…VYRRFEDVSE (91 aa).

Belongs to the NrdR family. Zn(2+) serves as cofactor.

Negatively regulates transcription of bacterial ribonucleotide reductase nrd genes and operons by binding to NrdR-boxes. The polypeptide is Transcriptional repressor NrdR (Burkholderia cenocepacia (strain ATCC BAA-245 / DSM 16553 / LMG 16656 / NCTC 13227 / J2315 / CF5610) (Burkholderia cepacia (strain J2315))).